The sequence spans 352 residues: 4-hydroxy-3-methylbut-2-enyl diphosphate reductase (352 aa).

Residue Cys-36 participates in [4Fe-4S] cluster binding. His-76 and His-114 together coordinate (2E)-4-hydroxy-3-methylbut-2-enyl diphosphate. The dimethylallyl diphosphate site is built by His-76 and His-114. Isopentenyl diphosphate contacts are provided by His-76 and His-114. Residue Cys-136 coordinates [4Fe-4S] cluster. His-164 lines the (2E)-4-hydroxy-3-methylbut-2-enyl diphosphate pocket. His-164 contacts dimethylallyl diphosphate. His-164 provides a ligand contact to isopentenyl diphosphate. Residue Glu-166 is the Proton donor of the active site. Residue Thr-204 participates in (2E)-4-hydroxy-3-methylbut-2-enyl diphosphate binding. Position 234 (Cys-234) interacts with [4Fe-4S] cluster. Residues Ser-262, Ser-263, Asn-264, and Ser-309 each coordinate (2E)-4-hydroxy-3-methylbut-2-enyl diphosphate. Dimethylallyl diphosphate-binding residues include Ser-262, Ser-263, Asn-264, and Ser-309. Positions 262, 263, 264, and 309 each coordinate isopentenyl diphosphate.

It belongs to the IspH family. [4Fe-4S] cluster is required as a cofactor.

It carries out the reaction isopentenyl diphosphate + 2 oxidized [2Fe-2S]-[ferredoxin] + H2O = (2E)-4-hydroxy-3-methylbut-2-enyl diphosphate + 2 reduced [2Fe-2S]-[ferredoxin] + 2 H(+). It catalyses the reaction dimethylallyl diphosphate + 2 oxidized [2Fe-2S]-[ferredoxin] + H2O = (2E)-4-hydroxy-3-methylbut-2-enyl diphosphate + 2 reduced [2Fe-2S]-[ferredoxin] + 2 H(+). It functions in the pathway isoprenoid biosynthesis; dimethylallyl diphosphate biosynthesis; dimethylallyl diphosphate from (2E)-4-hydroxy-3-methylbutenyl diphosphate: step 1/1. The protein operates within isoprenoid biosynthesis; isopentenyl diphosphate biosynthesis via DXP pathway; isopentenyl diphosphate from 1-deoxy-D-xylulose 5-phosphate: step 6/6. In terms of biological role, catalyzes the conversion of 1-hydroxy-2-methyl-2-(E)-butenyl 4-diphosphate (HMBPP) into a mixture of isopentenyl diphosphate (IPP) and dimethylallyl diphosphate (DMAPP). Acts in the terminal step of the DOXP/MEP pathway for isoprenoid precursor biosynthesis. The chain is 4-hydroxy-3-methylbut-2-enyl diphosphate reductase from Bifidobacterium longum (strain NCC 2705).